The following is a 207-amino-acid chain: Low-molecular weight cobalt-containing nitrile hydratase subunit alpha (207 aa).

4 residues coordinate Co(3+): C109, C112, S113, and C114.

This sequence belongs to the nitrile hydratase subunit alpha family. Heterodimer of an alpha and a beta chain. Requires Co(3+) as cofactor.

It carries out the reaction an aliphatic primary amide = an aliphatic nitrile + H2O. Its function is as follows. NHase catalyzes the hydration of various nitrile compounds to the corresponding amides. The sequence is that of Low-molecular weight cobalt-containing nitrile hydratase subunit alpha from Rhodococcus rhodochrous.